The following is a 483-amino-acid chain: Adenylyltransferase and sulfurtransferase uba4 (483 aa).

ATP is bound by residues G100, D121, 128 to 132, K145, and 178 to 179; these read SNLHR and DN. 2 residues coordinate Zn(2+): C227 and C230. C244 (glycyl thioester intermediate; for adenylyltransferase activity) is an active-site residue. Residues C306 and C309 each contribute to the Zn(2+) site. Residues 366–481 form the Rhodanese domain; it reads ISKEPTIIDV…WREQIDPDWP (116 aa). The Cysteine persulfide intermediate; for sulfurtransferase activity role is filled by C436.

In the N-terminal section; belongs to the HesA/MoeB/ThiF family. UBA4 subfamily. The cofactor is Zn(2+).

Its subcellular location is the cytoplasm. The protein resides in the cytosol. It catalyses the reaction [molybdopterin-synthase sulfur-carrier protein]-C-terminal Gly-Gly + ATP + H(+) = [molybdopterin-synthase sulfur-carrier protein]-C-terminal Gly-Gly-AMP + diphosphate. It carries out the reaction [molybdopterin-synthase sulfur-carrier protein]-C-terminal Gly-Gly-AMP + S-sulfanyl-L-cysteinyl-[cysteine desulfurase] + AH2 = [molybdopterin-synthase sulfur-carrier protein]-C-terminal-Gly-aminoethanethioate + L-cysteinyl-[cysteine desulfurase] + A + AMP + 2 H(+). It participates in tRNA modification; 5-methoxycarbonylmethyl-2-thiouridine-tRNA biosynthesis. Its function is as follows. Plays a central role in 2-thiolation of mcm(5)S(2)U at tRNA wobble positions of cytosolic tRNA(Lys), tRNA(Glu) and tRNA(Gln). Also essential during biosynthesis of the molybdenum cofactor. Acts by mediating the C-terminal thiocarboxylation of sulfur carriers urm1 and mocs2a. Its N-terminus first activates urm1 and mocs2a as acyl-adenylates (-COAMP), then the persulfide sulfur on the catalytic cysteine is transferred to urm1 and mocs2a to form thiocarboxylation (-COSH) of their C-terminus. The reaction probably involves hydrogen sulfide that is generated from the persulfide intermediate and that acts as a nucleophile towards urm1 and mocs2a. Subsequently, a transient disulfide bond is formed. Does not use thiosulfate as sulfur donor; nfs1 probably acting as a sulfur donor for thiocarboxylation reactions. This Neosartorya fischeri (strain ATCC 1020 / DSM 3700 / CBS 544.65 / FGSC A1164 / JCM 1740 / NRRL 181 / WB 181) (Aspergillus fischerianus) protein is Adenylyltransferase and sulfurtransferase uba4.